Reading from the N-terminus, the 371-residue chain is Dual-specificity RNA methyltransferase RlmN (371 aa).

E99 (proton acceptor) is an active-site residue. The 228-residue stretch at 106–333 (DDNRATLCIS…AIRRASKGQD (228 aa)) folds into the Radical SAM core domain. A disulfide bridge connects residues C113 and C338. Positions 120, 124, and 127 each coordinate [4Fe-4S] cluster. Residues 165 to 166 (GE), S197, 219 to 221 (SLN), and N295 contribute to the S-adenosyl-L-methionine site. C338 functions as the S-methylcysteine intermediate in the catalytic mechanism. The segment at 345–371 (LTVSPPAQESERNSARPDRSQGKGKHL) is disordered. Over residues 353–365 (ESERNSARPDRSQ) the composition is skewed to basic and acidic residues.

It belongs to the radical SAM superfamily. RlmN family. [4Fe-4S] cluster serves as cofactor.

Its subcellular location is the cytoplasm. The catalysed reaction is adenosine(2503) in 23S rRNA + 2 reduced [2Fe-2S]-[ferredoxin] + 2 S-adenosyl-L-methionine = 2-methyladenosine(2503) in 23S rRNA + 5'-deoxyadenosine + L-methionine + 2 oxidized [2Fe-2S]-[ferredoxin] + S-adenosyl-L-homocysteine. The enzyme catalyses adenosine(37) in tRNA + 2 reduced [2Fe-2S]-[ferredoxin] + 2 S-adenosyl-L-methionine = 2-methyladenosine(37) in tRNA + 5'-deoxyadenosine + L-methionine + 2 oxidized [2Fe-2S]-[ferredoxin] + S-adenosyl-L-homocysteine. Its function is as follows. Specifically methylates position 2 of adenine 2503 in 23S rRNA and position 2 of adenine 37 in tRNAs. m2A2503 modification seems to play a crucial role in the proofreading step occurring at the peptidyl transferase center and thus would serve to optimize ribosomal fidelity. The chain is Dual-specificity RNA methyltransferase RlmN from Syntrophotalea carbinolica (strain DSM 2380 / NBRC 103641 / GraBd1) (Pelobacter carbinolicus).